The chain runs to 328 residues: Sulfate adenylyltransferase subunit 2 (328 aa).

The disordered stretch occupies residues 309-328; it reads RAIDKDQTASMEKKKQEGYF.

Belongs to the PAPS reductase family. CysD subfamily. As to quaternary structure, heterodimer composed of CysD, the smaller subunit, and CysN.

It carries out the reaction sulfate + ATP + H(+) = adenosine 5'-phosphosulfate + diphosphate. It functions in the pathway sulfur metabolism; hydrogen sulfide biosynthesis; sulfite from sulfate: step 1/3. In terms of biological role, with CysN forms the ATP sulfurylase (ATPS) that catalyzes the adenylation of sulfate producing adenosine 5'-phosphosulfate (APS) and diphosphate, the first enzymatic step in sulfur assimilation pathway. APS synthesis involves the formation of a high-energy phosphoric-sulfuric acid anhydride bond driven by GTP hydrolysis by CysN coupled to ATP hydrolysis by CysD. This chain is Sulfate adenylyltransferase subunit 2, found in Hyphomonas neptunium (strain ATCC 15444).